The chain runs to 206 residues: A-type ATP synthase subunit D (206 aa).

The protein belongs to the V-ATPase D subunit family. In terms of assembly, has multiple subunits with at least A(3), B(3), C, D, E, F, H, I and proteolipid K(x).

It is found in the cell membrane. In terms of biological role, component of the A-type ATP synthase that produces ATP from ADP in the presence of a proton gradient across the membrane. The protein is A-type ATP synthase subunit D of Methanococcoides burtonii (strain DSM 6242 / NBRC 107633 / OCM 468 / ACE-M).